The primary structure comprises 371 residues: DNA-directed RNA polymerase subunit alpha (371 aa).

The tract at residues 1 to 248 (MSVKYGKFEM…KHFEVFNQFN (248 aa)) is alpha N-terminal domain (alpha-NTD). The interval 264–371 (DQDELMDKLS…KELVKHEDAK (108 aa)) is alpha C-terminal domain (alpha-CTD).

It belongs to the RNA polymerase alpha chain family. As to quaternary structure, homodimer. The RNAP catalytic core consists of 2 alpha, 1 beta, 1 beta' and 1 omega subunit. When a sigma factor is associated with the core the holoenzyme is formed, which can initiate transcription.

It carries out the reaction RNA(n) + a ribonucleoside 5'-triphosphate = RNA(n+1) + diphosphate. Functionally, DNA-dependent RNA polymerase catalyzes the transcription of DNA into RNA using the four ribonucleoside triphosphates as substrates. In Protochlamydia amoebophila (strain UWE25), this protein is DNA-directed RNA polymerase subunit alpha.